A 168-amino-acid polypeptide reads, in one-letter code: Photosystem I assembly protein Ycf3 (168 aa).

3 TPR repeats span residues 35 to 68, 72 to 105, and 120 to 153; these read AFTY…EIDP, SYIL…NPFL, and GEQA…TPGN.

The protein belongs to the Ycf3 family.

It is found in the plastid membrane. Functionally, essential for the assembly of the photosystem I (PSI) complex. May act as a chaperone-like factor to guide the assembly of the PSI subunits. This is Photosystem I assembly protein Ycf3 from Cuscuta reflexa (Southern Asian dodder).